The primary structure comprises 151 residues: Macrodomain Ter protein (151 aa).

Belongs to the MatP family. Homodimer.

It is found in the cytoplasm. Its function is as follows. Required for spatial organization of the terminus region of the chromosome (Ter macrodomain) during the cell cycle. Prevents early segregation of duplicated Ter macrodomains during cell division. Binds specifically to matS, which is a 13 bp signature motif repeated within the Ter macrodomain. The chain is Macrodomain Ter protein from Enterobacter sp. (strain 638).